Here is a 417-residue protein sequence, read N- to C-terminus: XO lethal protein 1 (417 aa).

Residues 373–417 (VSPGETSSEGISDEHHYEEYDEDDIMEEEEAPSARQDDTYDEDEE) form a disordered region. The span at 391–403 (EYDEDDIMEEEEA) shows a compositional bias: acidic residues.

This sequence belongs to the GHMP kinase family. Xol-1 subfamily.

It is found in the nucleus. Its function is as follows. Sex-determining factor that is required for sexual differentiation and X chromosome dosage compensation to promote male development. High expression during gastrulation triggers male development, while low expression at that time triggers hermaphrodite development. Although related to GHMP kinase, its mode of action remains unclear. This is XO lethal protein 1 from Caenorhabditis elegans.